The chain runs to 918 residues: Protein translocase subunit SecA (918 aa).

Residues Gln87, 105–109 (GEGKT), and Asp500 each bind ATP. Positions 876-918 (AGALPVAETLERDTPESWRNTPRNAPCPCGSGKKYKHCHGQAR) are disordered. Positions 902, 904, 913, and 914 each coordinate Zn(2+). The segment covering 908–918 (KKYKHCHGQAR) has biased composition (basic residues).

This sequence belongs to the SecA family. Monomer and homodimer. Part of the essential Sec protein translocation apparatus which comprises SecA, SecYEG and auxiliary proteins SecDF-YajC and YidC. Zn(2+) serves as cofactor.

It is found in the cell inner membrane. The protein localises to the cytoplasm. It catalyses the reaction ATP + H2O + cellular proteinSide 1 = ADP + phosphate + cellular proteinSide 2.. Part of the Sec protein translocase complex. Interacts with the SecYEG preprotein conducting channel. Has a central role in coupling the hydrolysis of ATP to the transfer of proteins into and across the cell membrane, serving both as a receptor for the preprotein-SecB complex and as an ATP-driven molecular motor driving the stepwise translocation of polypeptide chains across the membrane. The polypeptide is Protein translocase subunit SecA (Rhodospirillum centenum (strain ATCC 51521 / SW)).